The chain runs to 235 residues: Hydroxyacylglutathione hydrolase (235 aa).

The Zn(2+) site is built by histidine 53, histidine 55, aspartate 57, histidine 58, histidine 109, aspartate 127, and histidine 165.

This sequence belongs to the metallo-beta-lactamase superfamily. Glyoxalase II family. In terms of assembly, monomer. Requires Zn(2+) as cofactor.

It carries out the reaction an S-(2-hydroxyacyl)glutathione + H2O = a 2-hydroxy carboxylate + glutathione + H(+). It functions in the pathway secondary metabolite metabolism; methylglyoxal degradation; (R)-lactate from methylglyoxal: step 2/2. Its function is as follows. Thiolesterase that catalyzes the hydrolysis of S-D-lactoyl-glutathione to form glutathione and D-lactic acid. The chain is Hydroxyacylglutathione hydrolase from Glaesserella parasuis serovar 5 (strain SH0165) (Haemophilus parasuis).